Here is a 156-residue protein sequence, read N- to C-terminus: Putative pre-16S rRNA nuclease (156 aa).

Belongs to the YqgF nuclease family.

The protein localises to the cytoplasm. Could be a nuclease involved in processing of the 5'-end of pre-16S rRNA. This Rickettsia typhi (strain ATCC VR-144 / Wilmington) protein is Putative pre-16S rRNA nuclease.